We begin with the raw amino-acid sequence, 122 residues long: Large ribosomal subunit protein uL18 (122 aa).

The protein belongs to the universal ribosomal protein uL18 family. In terms of assembly, part of the 50S ribosomal subunit; part of the 5S rRNA/L5/L18/L25 subcomplex. Contacts the 5S and 23S rRNAs.

This is one of the proteins that bind and probably mediate the attachment of the 5S RNA into the large ribosomal subunit, where it forms part of the central protuberance. This chain is Large ribosomal subunit protein uL18, found in Synechococcus sp. (strain JA-3-3Ab) (Cyanobacteria bacterium Yellowstone A-Prime).